Reading from the N-terminus, the 905-residue chain is Protein translocase subunit SecA (905 aa).

ATP contacts are provided by residues Gln-87, Gly-105–Thr-109, and Asp-512. The tract at residues Arg-565–Ser-584 is disordered. Zn(2+)-binding residues include Cys-886, Cys-888, Cys-897, and His-898.

The protein belongs to the SecA family. As to quaternary structure, monomer and homodimer. Part of the essential Sec protein translocation apparatus which comprises SecA, SecYEG and auxiliary proteins SecDF-YajC and YidC. The cofactor is Zn(2+).

The protein localises to the cell inner membrane. It is found in the cytoplasm. The catalysed reaction is ATP + H2O + cellular proteinSide 1 = ADP + phosphate + cellular proteinSide 2.. Its function is as follows. Part of the Sec protein translocase complex. Interacts with the SecYEG preprotein conducting channel. Has a central role in coupling the hydrolysis of ATP to the transfer of proteins into and across the cell membrane, serving both as a receptor for the preprotein-SecB complex and as an ATP-driven molecular motor driving the stepwise translocation of polypeptide chains across the membrane. In Haemophilus ducreyi (strain 35000HP / ATCC 700724), this protein is Protein translocase subunit SecA.